Reading from the N-terminus, the 388-residue chain is Probable mannan endo-1,4-beta-mannosidase A-1 (388 aa).

The first 20 residues, 1–20 (MKLSPLMALAGLASAQLALA), serve as a signal peptide directing secretion. Substrate contacts are provided by W93 and N206. The active-site Proton donor is the E207. The N-linked (GlcNAc...) asparagine glycan is linked to N264. Y282 lines the substrate pocket. The active-site Nucleophile is the E315. N335 is a glycosylation site (N-linked (GlcNAc...) asparagine). W345 serves as a coordination point for substrate.

It belongs to the glycosyl hydrolase 5 (cellulase A) family.

Its subcellular location is the secreted. The catalysed reaction is Random hydrolysis of (1-&gt;4)-beta-D-mannosidic linkages in mannans, galactomannans and glucomannans.. In terms of biological role, endo-1,4-mannanase, a crucial enzyme for depolymerization of seed galactomannans and wood galactoglucomannans. The polypeptide is Probable mannan endo-1,4-beta-mannosidase A-1 (manA-1) (Aspergillus terreus (strain NIH 2624 / FGSC A1156)).